The chain runs to 108 residues: Colipase B (108 aa).

The N-terminal stretch at 1–13 is a signal peptide; that stretch reads LALLLVALAVAYA. Residues 14 to 18 constitute a propeptide, enterostatin, activation peptide; that stretch reads VPDPR. Disulfide bonds link C30/C41, C36/C52, C40/C74, C62/C82, and C76/C100. Residue W65 participates in taurodeoxycholate binding.

Belongs to the colipase family. In terms of assembly, forms a 1:1 stoichiometric complex with pancreatic lipase. As to expression, expressed by the pancreas.

It is found in the secreted. Colipase is a cofactor of pancreatic lipase. It allows the lipase to anchor itself to the lipid-water interface. Without colipase the enzyme is washed off by bile salts, which have an inhibitory effect on the lipase. In terms of biological role, enterostatin has a biological activity as a satiety signal. This chain is Colipase B (CLPS2), found in Equus caballus (Horse).